We begin with the raw amino-acid sequence, 651 residues long: Acetyl-coenzyme A synthetase (651 aa).

CoA is bound by residues 193–196, threonine 313, and asparagine 337; that span reads RAGR. ATP is bound by residues 389 to 391, 413 to 418, aspartate 502, and arginine 517; these read GEP and DTWWQT. Position 525 (serine 525) interacts with CoA. Arginine 528 provides a ligand contact to ATP. Mg(2+) is bound by residues valine 539, histidine 541, and valine 544. Arginine 586 provides a ligand contact to CoA. Lysine 611 is subject to N6-acetyllysine.

Belongs to the ATP-dependent AMP-binding enzyme family. Requires Mg(2+) as cofactor. Acetylated. Deacetylation by the SIR2-homolog deacetylase activates the enzyme.

It carries out the reaction acetate + ATP + CoA = acetyl-CoA + AMP + diphosphate. Catalyzes the conversion of acetate into acetyl-CoA (AcCoA), an essential intermediate at the junction of anabolic and catabolic pathways. AcsA undergoes a two-step reaction. In the first half reaction, AcsA combines acetate with ATP to form acetyl-adenylate (AcAMP) intermediate. In the second half reaction, it can then transfer the acetyl group from AcAMP to the sulfhydryl group of CoA, forming the product AcCoA. The chain is Acetyl-coenzyme A synthetase from Shewanella denitrificans (strain OS217 / ATCC BAA-1090 / DSM 15013).